The following is a 303-amino-acid chain: Acetaldehyde dehydrogenase 2 (303 aa).

Residue C130 is the Acyl-thioester intermediate of the active site. NAD(+) contacts are provided by residues 161–169 (SVGPGTRKN) and N272.

It belongs to the acetaldehyde dehydrogenase family.

The enzyme catalyses acetaldehyde + NAD(+) + CoA = acetyl-CoA + NADH + H(+). This chain is Acetaldehyde dehydrogenase 2, found in Burkholderia vietnamiensis (strain G4 / LMG 22486) (Burkholderia cepacia (strain R1808)).